A 1499-amino-acid polypeptide reads, in one-letter code: Ring canal kelch homolog (1499 aa).

Polar residues predominate over residues 56-66 (LDESSQKQLPR). Positions 56-75 (LDESSQKQLPRSNGKEKTTG) are disordered. The BTB domain occupies 100 to 166 (CDVVLVAEGI…VYRAVVEVTE (67 aa)). Kelch repeat units lie at residues 351–396 (VLLV…VLGD), 397–443 (KVYA…VLNN), 444–490 (CIYA…VVNG), 492–539 (LYAV…VLDN), 541–586 (LYAV…AHNG), and 588–634 (LYVV…MIDK). Position 637 (Sec637) is a non-standard amino acid, selenocysteine. Disordered stretches follow at residues 679–714 (AGQAAGFGNDDENSQAEGLNPEPANSNNSAPNGNNV), 750–786 (LQYAVLNQPQPGPSGLGPGQAHRSLGGERGAVGGGGG), 825–856 (AGYDVPRGRPAPSYYQNQPPTGPSANGRCPNL), 984–1017 (NQSNSSSASSASPYGANGPATTSQPNPTKDSSSV), 1033–1085 (SMNN…GNGG), 1107–1160 (ASTS…PVDV), 1301–1321 (QVGRARSESPSRPPGSDPLRT), and 1334–1499 (ARSP…TASE). Residues 698-713 (NPEPANSNNSAPNGNN) show a composition bias toward low complexity. Residues 776-786 (GERGAVGGGGG) are compositionally biased toward gly residues. A compositionally biased stretch (low complexity) spans 986–1003 (SNSSSASSASPYGANGPA). Residues 1004–1017 (TTSQPNPTKDSSSV) are compositionally biased toward polar residues. Low complexity predominate over residues 1040–1054 (SSAAHGTASGSAPAA). Gly residues predominate over residues 1065–1085 (ISGGASGGGAGGAGSSGGNGG). Over residues 1107–1119 (ASTSTTLGGKSTG) the composition is skewed to low complexity. Over residues 1135–1147 (GPSDPTAGTSAPQ) the composition is skewed to polar residues. The span at 1348–1359 (NREKPREVRRIT) shows a compositional bias: basic and acidic residues. Residues 1401–1410 (SSASSSSDSD) show a composition bias toward low complexity. Over residues 1460-1471 (VGSSSNETSDSL) the composition is skewed to polar residues.

It is found in the cytoplasm. It localises to the cytoskeleton. May play a role in organizing the actin cytoskeleton. In Anopheles stephensi (Indo-Pakistan malaria mosquito), this protein is Ring canal kelch homolog.